The sequence spans 157 residues: UPF0251 protein CLM_1546 (157 aa).

The protein belongs to the UPF0251 family.

The sequence is that of UPF0251 protein CLM_1546 from Clostridium botulinum (strain Kyoto / Type A2).